A 657-amino-acid polypeptide reads, in one-letter code: MSDIQEQQASIAITLPDGTVKNVPSGSTGFDIALSIGKRLADDALAVTINGKPTDLHAPVLCDANIEIVTFDSQLGRDIFWHTASHIMAQAIEEIFPGSRFGAGPATEQGFYYDVASEHRFREEDLRAIEQKMLEIAKRNIMLQREEMKRVDAIAYFTSVRNDPYKVEILEDTLKHVDTVSLYHQGDFADLCTGPHLPSTSRLKAVLLSNISSSYWRGDSSRENMQRIYGIAFPSDKLLKEHIARQEEAKRRDHRKLGTELELFMLSPEIGSGLPVWLPKGAVIRSELETFLKEEQRKRGYLPVYTPHIGNIELYKRSGHYPYYSDSQFPPLTYHDEDGKQEQYLLKPMNCPHHHLIYSSKLRSYRDLPIRLTEFGTVYRHEQSGELNGLVRARGFTQDDSHIYCTPEQLVDEICNAIDLTQFVFGTLGFSEVQTRLSMHDPANQQKYGGTAEIWEQAEKDVREAADRMGIDYFIGVGEASFYGPKIDFIVRDALGRKWQLGTVQVDYVMPERFDLSYIGSDGQKHRPVVIHRAPFGSMERFIGVLIEHTAGNFPLWLAPVQAVVLPIAEEVHDYAKTIHTALLAAGIRVEIDTRNEKIGRKIREAEIGKIPCMIIVGQKERDSGEISLRRHRSGDMGSFTVPGLIDILKKEISERT.

Positions 7 to 70 (QQASIAITLP…LCDANIEIVT (64 aa)) constitute a TGS domain. Positions 253-555 (DHRKLGTELE…LIEHTAGNFP (303 aa)) are catalytic. The Zn(2+) site is built by Cys351, His402, and His532.

Belongs to the class-II aminoacyl-tRNA synthetase family. In terms of assembly, homodimer. Requires Zn(2+) as cofactor.

Its subcellular location is the cytoplasm. The enzyme catalyses tRNA(Thr) + L-threonine + ATP = L-threonyl-tRNA(Thr) + AMP + diphosphate + H(+). Catalyzes the attachment of threonine to tRNA(Thr) in a two-step reaction: L-threonine is first activated by ATP to form Thr-AMP and then transferred to the acceptor end of tRNA(Thr). Also edits incorrectly charged L-seryl-tRNA(Thr). The polypeptide is Threonine--tRNA ligase (Chlorobium limicola (strain DSM 245 / NBRC 103803 / 6330)).